Here is an 849-residue protein sequence, read N- to C-terminus: MAP7 domain-containing protein 1 (849 aa).

Disordered regions lie at residues methionine 1–arginine 151 and glutamate 186–lysine 210. A compositionally biased stretch (pro residues) spans glutamate 24 to proline 41. Residues threonine 49 and threonine 53 each carry the phosphothreonine modification. Phosphoserine is present on residues serine 72 and serine 95. Threonine 99 is modified (phosphothreonine). Serine 115 and serine 118 each carry phosphoserine. The residue at position 120 (threonine 120) is a Phosphothreonine. Phosphoserine is present on residues serine 125 and serine 127. Positions glutamine 132–arginine 151 are enriched in basic and acidic residues. The stretch at glutamate 167–lysine 223 forms a coiled coil. Phosphoserine is present on residues serine 256, serine 275, serine 315, serine 368, and serine 401. A disordered region spans residues threonine 318–aspartate 815. Positions arginine 407–arginine 437 are enriched in basic and acidic residues. Residues serine 444, serine 448, serine 454, and serine 460 each carry the phosphoserine modification. Over residues alanine 457–tryptophan 474 the composition is skewed to polar residues. A Glycyl lysine isopeptide (Lys-Gly) (interchain with G-Cter in SUMO2) cross-link involves residue lysine 462. A phosphoserine mark is found at serine 479 and serine 496. The segment covering serine 479–proline 497 has biased composition (pro residues). The span at proline 523–proline 539 shows a compositional bias: basic and acidic residues. The span at proline 542 to alanine 556 shows a compositional bias: pro residues. Residues serine 544, serine 548, and serine 552 each carry the phosphoserine modification. Phosphothreonine is present on threonine 554. Low complexity predominate over residues proline 568–phenylalanine 582. Positions threonine 602–isoleucine 724 form a coiled coil. Positions threonine 603–glutamate 743 are enriched in basic and acidic residues.

The protein belongs to the MAP7 family.

The protein resides in the cytoplasm. It is found in the cytoskeleton. The protein localises to the spindle. It localises to the microtubule organizing center. Its subcellular location is the centrosome. The protein resides in the midbody. Its function is as follows. Microtubule-stabilizing protein involved in the control of cell motility and neurite outgrowth. Facilitate microtubule stabilization through the maintenance of acetylated stable microtubules. The protein is MAP7 domain-containing protein 1 (Map7d1) of Rattus norvegicus (Rat).